The following is a 217-amino-acid chain: Peroxiredoxin (217 aa).

The region spanning 2 to 159 (VVIGEKFPEV…VVRLVKALQT (158 aa)) is the Thioredoxin domain. Cys46 functions as the Cysteine sulfenic acid (-SOH) intermediate in the catalytic mechanism. Arg122 is a binding site for substrate.

It belongs to the peroxiredoxin family. Prx6 subfamily. In terms of assembly, homodecamer. Pentamer of dimers that assemble into a ring structure.

It is found in the cytoplasm. The catalysed reaction is a hydroperoxide + [thioredoxin]-dithiol = an alcohol + [thioredoxin]-disulfide + H2O. Functionally, thiol-specific peroxidase that catalyzes the reduction of hydrogen peroxide and organic hydroperoxides to water and alcohols, respectively. Plays a role in cell protection against oxidative stress by detoxifying peroxides. The protein is Peroxiredoxin of Methanococcus maripaludis (strain C5 / ATCC BAA-1333).